The sequence spans 128 residues: Fluoride-specific ion channel FluC (128 aa).

The next 4 helical transmembrane spans lie at 6 to 26 (LVAL…GLVL), 36 to 56 (LPTF…AGLA), 68 to 88 (VLLF…GLET), and 99 to 119 (IAAA…WLGF). 2 residues coordinate Na(+): glycine 76 and threonine 79.

This sequence belongs to the fluoride channel Fluc/FEX (TC 1.A.43) family.

The protein localises to the cell inner membrane. The catalysed reaction is fluoride(in) = fluoride(out). Na(+) is not transported, but it plays an essential structural role and its presence is essential for fluoride channel function. In terms of biological role, fluoride-specific ion channel. Important for reducing fluoride concentration in the cell, thus reducing its toxicity. The sequence is that of Fluoride-specific ion channel FluC from Methylobacillus flagellatus (strain ATCC 51484 / DSM 6875 / VKM B-1610 / KT).